Consider the following 53-residue polypeptide: UPF0391 membrane protein YtjA (53 aa).

A run of 2 helical transmembrane segments spans residues 4 to 24 (WGII…GGLA) and 30 to 48 (AAKI…SLFM).

Belongs to the UPF0391 family.

The protein localises to the cell membrane. The polypeptide is UPF0391 membrane protein YtjA (Salmonella agona (strain SL483)).